The sequence spans 342 residues: N-acetyl-gamma-glutamyl-phosphate reductase (342 aa).

Residue Cys149 is part of the active site.

Belongs to the NAGSA dehydrogenase family. Type 1 subfamily.

The protein localises to the cytoplasm. The catalysed reaction is N-acetyl-L-glutamate 5-semialdehyde + phosphate + NADP(+) = N-acetyl-L-glutamyl 5-phosphate + NADPH + H(+). The protein operates within amino-acid biosynthesis; L-arginine biosynthesis; N(2)-acetyl-L-ornithine from L-glutamate: step 3/4. Catalyzes the NADPH-dependent reduction of N-acetyl-5-glutamyl phosphate to yield N-acetyl-L-glutamate 5-semialdehyde. In Laribacter hongkongensis (strain HLHK9), this protein is N-acetyl-gamma-glutamyl-phosphate reductase.